Reading from the N-terminus, the 344-residue chain is Dihydroorotase (344 aa).

Positions 14 and 16 each coordinate Zn(2+). Residues 16-18 (HLR) and Asn-42 contribute to the substrate site. The Zn(2+) site is built by Lys-100, His-137, and His-175. An N6-carboxylysine modification is found at Lys-100. His-137 is a binding site for substrate. Residue Leu-220 coordinates substrate. Residue Asp-248 participates in Zn(2+) binding. Residue Asp-248 is part of the active site. His-252 and Ala-264 together coordinate substrate.

Belongs to the metallo-dependent hydrolases superfamily. DHOase family. Class II DHOase subfamily. As to quaternary structure, homodimer. Requires Zn(2+) as cofactor.

It catalyses the reaction (S)-dihydroorotate + H2O = N-carbamoyl-L-aspartate + H(+). It functions in the pathway pyrimidine metabolism; UMP biosynthesis via de novo pathway; (S)-dihydroorotate from bicarbonate: step 3/3. Functionally, catalyzes the reversible cyclization of carbamoyl aspartate to dihydroorotate. In Cupriavidus necator (strain ATCC 17699 / DSM 428 / KCTC 22496 / NCIMB 10442 / H16 / Stanier 337) (Ralstonia eutropha), this protein is Dihydroorotase.